The primary structure comprises 546 residues: Choline oxidase (546 aa).

FAD contacts are provided by residues 23-24, Glu44, Trp71, 90-92, 96-103, Ala232, and Tyr465; these read SA, AKV, and CSSHNSCI. At His99 the chain carries Tele-8alpha-FAD histidine. His466 acts as the Proton acceptor in catalysis. Residues Ala500 and 510 to 512 contribute to the FAD site; that span reads NPN.

It belongs to the GMC oxidoreductase family. As to quaternary structure, homodimer. FAD is required as a cofactor.

It carries out the reaction choline + 2 O2 + H2O = glycine betaine + 2 H2O2 + H(+). It participates in amine and polyamine biosynthesis; betaine biosynthesis via choline pathway; betaine from choline: step 1/1. Catalyzes the two-step oxidative conversion of choline to glycine-betaine with betaine aldehyde as an intermediate. Glycine-betaine accumulates to high levels in the cytoplasm of cells to prevent dehydration and plasmolysis in adverse hyperosmotic environments. Accepts either choline or the reaction intermediate betaine-aldehyde as substrate. This is Choline oxidase (codA) from Arthrobacter globiformis.